The following is a 146-amino-acid chain: Large ribosomal subunit protein uL15 (146 aa).

A compositionally biased stretch (basic and acidic residues) spans 1–18 (MKLHELKAAEGTRKERNR). Residues 1–58 (MKLHELKAAEGTRKERNRVGRGMSSGNGKTSGRGHKGQKARSGGGVRPGFEGGQMPLF) are disordered. The span at 42-52 (SGGGVRPGFEG) shows a compositional bias: gly residues.

The protein belongs to the universal ribosomal protein uL15 family. As to quaternary structure, part of the 50S ribosomal subunit.

Functionally, binds to the 23S rRNA. This Oceanobacillus iheyensis (strain DSM 14371 / CIP 107618 / JCM 11309 / KCTC 3954 / HTE831) protein is Large ribosomal subunit protein uL15.